The primary structure comprises 290 residues: ATP synthase gamma chain (290 aa).

It belongs to the ATPase gamma chain family. F-type ATPases have 2 components, CF(1) - the catalytic core - and CF(0) - the membrane proton channel. CF(1) has five subunits: alpha(3), beta(3), gamma(1), delta(1), epsilon(1). CF(0) has three main subunits: a, b and c.

Its subcellular location is the cell inner membrane. Produces ATP from ADP in the presence of a proton gradient across the membrane. The gamma chain is believed to be important in regulating ATPase activity and the flow of protons through the CF(0) complex. The sequence is that of ATP synthase gamma chain from Chlorobium luteolum (strain DSM 273 / BCRC 81028 / 2530) (Pelodictyon luteolum).